A 476-amino-acid chain; its full sequence is Methylenetetrahydrofolate--tRNA-(uracil-5-)-methyltransferase TrmFO (476 aa).

14-19 (GGGLAG) contacts FAD. Residues 428 to 447 (LTEPPTHGADGKKLRGPEKS) form a disordered region. Residues 436–447 (ADGKKLRGPEKS) are compositionally biased toward basic and acidic residues.

It belongs to the MnmG family. TrmFO subfamily. FAD is required as a cofactor.

Its subcellular location is the cytoplasm. It carries out the reaction uridine(54) in tRNA + (6R)-5,10-methylene-5,6,7,8-tetrahydrofolate + NADH + H(+) = 5-methyluridine(54) in tRNA + (6S)-5,6,7,8-tetrahydrofolate + NAD(+). It catalyses the reaction uridine(54) in tRNA + (6R)-5,10-methylene-5,6,7,8-tetrahydrofolate + NADPH + H(+) = 5-methyluridine(54) in tRNA + (6S)-5,6,7,8-tetrahydrofolate + NADP(+). In terms of biological role, catalyzes the folate-dependent formation of 5-methyl-uridine at position 54 (M-5-U54) in all tRNAs. This chain is Methylenetetrahydrofolate--tRNA-(uracil-5-)-methyltransferase TrmFO, found in Rhodopseudomonas palustris (strain BisA53).